The sequence spans 1299 residues: Nuclear factor related to kappa-B-binding protein (1299 aa).

The DEUBAD domain occupies 39–156 (PEDLLEDPEI…LKQILASRSD (118 aa)). 2 disordered regions span residues 163-187 (RSGPALPFRQKRPSPSRTPEEREWR) and 204-232 (GDTALSSDEEDLSSWLPSSPARSPSPAVP). Over residues 216 to 232 (SSWLPSSPARSPSPAVP) the composition is skewed to low complexity. Phosphoserine is present on residues S228 and S298. Residue K327 forms a Glycyl lysine isopeptide (Lys-Gly) (interchain with G-Cter in SUMO2) linkage. The residue at position 351 (S351) is a Phosphoserine. The tract at residues 370 to 495 (LGINEISSSF…FCKQENEDSS (126 aa)) is winged-helix like domain. Residue K469 forms a Glycyl lysine isopeptide (Lys-Gly) (interchain with G-Cter in SUMO2) linkage. Residue K488 forms a Glycyl lysine isopeptide (Lys-Gly) (interchain with G-Cter in SUMO1); alternate linkage. K488 is covalently cross-linked (Glycyl lysine isopeptide (Lys-Gly) (interchain with G-Cter in SUMO2); alternate). Disordered regions lie at residues 669-760 (AAKA…SSSG), 882-902 (LPATASPVSKPATSSPGTSAP), and 1017-1043 (VHAADSPAKASSASAPSSTPTGTTVVK). Low complexity-rich tracts occupy residues 677 to 688 (QQKPKPPSKVKS), 695 to 715 (IKVLSSGPSEQSQMSLSDSSM), and 723 to 733 (VTPTTPALPAI). Polar residues predominate over residues 744-760 (NKSGPSTVSEPAKSSSG). Low complexity-rich tracts occupy residues 892 to 902 (PATSSPGTSAP) and 1019 to 1043 (AADSPAKASSASAPSSTPTGTTVVK). Residue S1022 is modified to Phosphoserine. K1237 is modified (N6-acetyllysine). At S1291 the chain carries Phosphoserine.

This sequence belongs to the NFRKB family. In terms of assembly, component of the chromatin remodeling INO80 complex; specifically part of a complex module associated with the N-terminus of INO80. Interacts with UCHL5; NFRKB competes with ADRM1 for interaction with UCHL5. Expressed in thymus, brain, testes, spleen and liver.

It localises to the nucleus. In terms of biological role, binds to the DNA consensus sequence 5'-GGGGAATCTCC-3'. Its function is as follows. Putative regulatory component of the chromatin remodeling INO80 complex which is involved in transcriptional regulation, DNA replication and probably DNA repair. Modulates the deubiquitinase activity of UCHL5 in the INO80 complex. This chain is Nuclear factor related to kappa-B-binding protein (NFRKB), found in Homo sapiens (Human).